A 515-amino-acid polypeptide reads, in one-letter code: MTALTLSTAGAATLRADALVVGVAKGVKGPVLAPGSEAVDKAFDGKLAAVLATLGATGAEGELTKLPAASGLKAPVVVAVGLGPVPDKEDAYDAEALRRAAGTAARALTGSKKAGFALPAASVEDAAAVAEGALLGAYAFTAYQGGENKLAPKDAKSKGNGPKLPLAEVALLGAKPRDKAYKAAVERSLALVEEINRARDLVNTPPNDLYPESFAAVATAAGKEHGVKVQVLDEKALVKGGFGGILGVGQGASRGPRLVKLAYTHPKAEKTLALVGKGITYDSGGISLKPAGHNETMKCDMAGAAAVFAAVVTAARLGLKVNVTGWLALAENMPSGNATRPGDVLRMYSGKTVEVLNTDAEGRLVLADALTRASEEKPDAIVDVATLTGAMVLALGNRTFGVMANDDAFRTSLHEIAEEVGEPSWPMPLPADLRKGMDSPTADIANMGERMGGGLVAGLFLKEFVGEGIAWAHLDIAGPAFHEGAPYGYTPKGGTGSAVRTLVRLAERTAAGDLG.

Residues lysine 277 and aspartate 282 each contribute to the Mn(2+) site. Residue lysine 289 is part of the active site. Mn(2+)-binding residues include aspartate 300, aspartate 359, and glutamate 361. Arginine 363 is an active-site residue.

The protein belongs to the peptidase M17 family. The cofactor is Mn(2+).

It is found in the cytoplasm. It catalyses the reaction Release of an N-terminal amino acid, Xaa-|-Yaa-, in which Xaa is preferably Leu, but may be other amino acids including Pro although not Arg or Lys, and Yaa may be Pro. Amino acid amides and methyl esters are also readily hydrolyzed, but rates on arylamides are exceedingly low.. The catalysed reaction is Release of an N-terminal amino acid, preferentially leucine, but not glutamic or aspartic acids.. Its function is as follows. Presumably involved in the processing and regular turnover of intracellular proteins. Catalyzes the removal of unsubstituted N-terminal amino acids from various peptides. The chain is Probable cytosol aminopeptidase from Streptomyces griseus subsp. griseus (strain JCM 4626 / CBS 651.72 / NBRC 13350 / KCC S-0626 / ISP 5235).